The chain runs to 529 residues: Bifunctional purine biosynthesis protein PurH (529 aa).

Residues 1–148 enclose the MGS-like domain; that stretch reads MNNARPIRRA…KNHKDTTIIV (148 aa).

Belongs to the PurH family.

The catalysed reaction is (6R)-10-formyltetrahydrofolate + 5-amino-1-(5-phospho-beta-D-ribosyl)imidazole-4-carboxamide = 5-formamido-1-(5-phospho-D-ribosyl)imidazole-4-carboxamide + (6S)-5,6,7,8-tetrahydrofolate. The enzyme catalyses IMP + H2O = 5-formamido-1-(5-phospho-D-ribosyl)imidazole-4-carboxamide. Its pathway is purine metabolism; IMP biosynthesis via de novo pathway; 5-formamido-1-(5-phospho-D-ribosyl)imidazole-4-carboxamide from 5-amino-1-(5-phospho-D-ribosyl)imidazole-4-carboxamide (10-formyl THF route): step 1/1. It functions in the pathway purine metabolism; IMP biosynthesis via de novo pathway; IMP from 5-formamido-1-(5-phospho-D-ribosyl)imidazole-4-carboxamide: step 1/1. This is Bifunctional purine biosynthesis protein PurH from Shewanella halifaxensis (strain HAW-EB4).